The sequence spans 251 residues: Transmembrane ascorbate-dependent reductase CYB561 (251 aa).

M1 carries the post-translational modification N-acetylmethionine. Residues M1–Y16 are Cytoplasmic-facing. The helical transmembrane segment at V17–L37 threads the bilayer. Positions F19 to T220 constitute a Cytochrome b561 domain. Over Y38 to N51 the chain is Vesicular. Residues A52–Y72 traverse the membrane as a helical segment. The heme b site is built by H53, R73, and K80. At R73–V85 the chain is on the cytoplasmic side. Residues K80 and K84 each contribute to the L-ascorbate site. Residues L86 to F106 traverse the membrane as a helical segment. Heme b contacts are provided by residues H87, D116–S119, and H121. At D107–C124 the chain is on the vesicular side. A helical membrane pass occupies residues G125–F145. The Cytoplasmic portion of the chain corresponds to P146–P158. Residue R153 coordinates L-ascorbate. A helical membrane pass occupies residues Q159–L179. Positions 160 and 181 each coordinate heme b. Topologically, residues K180–G198 are vesicular. Residues V199–L219 traverse the membrane as a helical segment. At T220–Q251 the chain is on the cytoplasmic side. K225 is a heme b binding site. S247 is subject to Phosphoserine.

Requires heme b as cofactor. As to expression, expressed in many tissues, in particular the brain especially in the cortex and hippocampus.

It is found in the cytoplasmic vesicle. The protein resides in the secretory vesicle. The protein localises to the chromaffin granule membrane. It catalyses the reaction monodehydro-L-ascorbate radical(out) + L-ascorbate(in) = monodehydro-L-ascorbate radical(in) + L-ascorbate(out). Functionally, transmembrane reductase that uses ascorbate as an electron donor in the cytoplasm and transfers electrons across membranes to reduce monodehydro-L-ascorbate radical in the lumen of secretory vesicles. It is therefore involved the regeneration and homeostasis within secretory vesicles of ascorbate which in turn provides reducing equivalents needed to support the activity of intravesicular enzymes. The sequence is that of Transmembrane ascorbate-dependent reductase CYB561 from Homo sapiens (Human).